The primary structure comprises 95 residues: uncharacterized protein (95 aa).

This is an uncharacterized protein from Methanocaldococcus jannaschii (strain ATCC 43067 / DSM 2661 / JAL-1 / JCM 10045 / NBRC 100440) (Methanococcus jannaschii).